We begin with the raw amino-acid sequence, 277 residues long: Mitochondrial outer membrane protein porin 5 (277 aa).

It belongs to the eukaryotic mitochondrial porin (TC 1.B.8.1) family.

It localises to the mitochondrion outer membrane. Functionally, forms a channel through the mitochondrial outer membrane that allows diffusion of small hydrophilic molecules. The channel adopts an open conformation at low or zero membrane potential and a closed conformation at potentials above 30-40 mV. The open state has a weak anion selectivity whereas the closed state is cation-selective. The sequence is that of Mitochondrial outer membrane protein porin 5 (VDAC5) from Oryza sativa subsp. japonica (Rice).